The chain runs to 338 residues: 1-aminocyclopropane-1-carboxylate deaminase (338 aa).

N6-(pyridoxal phosphate)lysine is present on Lys-51. The Nucleophile role is filled by Ser-78.

Belongs to the ACC deaminase/D-cysteine desulfhydrase family. As to quaternary structure, homotrimer. Requires pyridoxal 5'-phosphate as cofactor.

It carries out the reaction 1-aminocyclopropane-1-carboxylate + H2O = 2-oxobutanoate + NH4(+). In terms of biological role, catalyzes a cyclopropane ring-opening reaction, the irreversible conversion of 1-aminocyclopropane-1-carboxylate (ACC) to ammonia and alpha-ketobutyrate. Allows growth on ACC as a nitrogen source. The sequence is that of 1-aminocyclopropane-1-carboxylate deaminase from Burkholderia lata (strain ATCC 17760 / DSM 23089 / LMG 22485 / NCIMB 9086 / R18194 / 383).